Here is a 99-residue protein sequence, read N- to C-terminus: Integration host factor subunit alpha (99 aa).

The protein belongs to the bacterial histone-like protein family. As to quaternary structure, heterodimer of an alpha and a beta chain.

Its function is as follows. This protein is one of the two subunits of integration host factor, a specific DNA-binding protein that functions in genetic recombination as well as in transcriptional and translational control. The chain is Integration host factor subunit alpha (ihfA) from Mannheimia haemolytica (Pasteurella haemolytica).